The primary structure comprises 99 residues: DNA/RNA-binding protein Alba 1 (99 aa).

Lysine 17 is subject to N6-acetyllysine.

This sequence belongs to the histone-like Alba family. Acetylated. Acetylation at Lys-17 decreases DNA-binding affinity.

It localises to the cytoplasm. Its subcellular location is the chromosome. In terms of biological role, binds double-stranded DNA tightly but without sequence specificity. Involved in DNA compaction. The sequence is that of DNA/RNA-binding protein Alba 1 from Sulfurisphaera tokodaii (strain DSM 16993 / JCM 10545 / NBRC 100140 / 7) (Sulfolobus tokodaii).